A 230-amino-acid chain; its full sequence is Rab15 effector protein (230 aa).

A lipid anchor (N-myristoyl glycine) is attached at glycine 2.

As to quaternary structure, interacts with the GTP-bound form of RAB15, RAB3A-D and RAB34.

The protein localises to the early endosome membrane. Functionally, effector that interacts with Rab GTPases in their active form (GTP-bound) including RAB15, RAB3A-D and RAB34. Controls downstream signaling such as cell proliferation and cell migration. Also regulates transferrin receptor recycling from the endocytic recycling compartment. This is Rab15 effector protein from Mus musculus (Mouse).